The sequence spans 92 residues: PqqA binding protein (92 aa).

It belongs to the PqqD family. Monomer. Interacts with PqqE.

The protein operates within cofactor biosynthesis; pyrroloquinoline quinone biosynthesis. Functionally, functions as a PqqA binding protein and presents PqqA to PqqE, in the pyrroloquinoline quinone (PQQ) biosynthetic pathway. The polypeptide is PqqA binding protein (Xanthomonas campestris pv. campestris (strain 8004)).